We begin with the raw amino-acid sequence, 428 residues long: Chaperone SurA (428 aa).

A signal peptide spans 1–19 (MNIWKTLLLGMLVTGSAVS). 2 consecutive PpiC domains span residues 170–268 (SVEY…KIED) and 277–377 (VTEV…EVLD).

The protein localises to the periplasm. The catalysed reaction is [protein]-peptidylproline (omega=180) = [protein]-peptidylproline (omega=0). Functionally, chaperone involved in the correct folding and assembly of outer membrane proteins. Recognizes specific patterns of aromatic residues and the orientation of their side chains, which are found more frequently in integral outer membrane proteins. May act in both early periplasmic and late outer membrane-associated steps of protein maturation. This chain is Chaperone SurA, found in Vibrio vulnificus (strain CMCP6).